Consider the following 340-residue polypeptide: Uroporphyrinogen decarboxylase (340 aa).

Residues 23–27 (RQAGR), Asp72, Tyr147, Thr202, and His316 contribute to the substrate site.

It belongs to the uroporphyrinogen decarboxylase family. In terms of assembly, homodimer.

The protein resides in the cytoplasm. It carries out the reaction uroporphyrinogen III + 4 H(+) = coproporphyrinogen III + 4 CO2. It participates in porphyrin-containing compound metabolism; protoporphyrin-IX biosynthesis; coproporphyrinogen-III from 5-aminolevulinate: step 4/4. In terms of biological role, catalyzes the decarboxylation of four acetate groups of uroporphyrinogen-III to yield coproporphyrinogen-III. This is Uroporphyrinogen decarboxylase from Trichlorobacter lovleyi (strain ATCC BAA-1151 / DSM 17278 / SZ) (Geobacter lovleyi).